The sequence spans 507 residues: 2,3-bisphosphoglycerate-independent phosphoglycerate mutase (507 aa).

Mn(2+) is bound by residues aspartate 11 and serine 61. Serine 61 serves as the catalytic Phosphoserine intermediate. Substrate contacts are provided by residues histidine 122, 152–153 (RD), arginine 183, arginine 189, 258–261 (RNDR), and lysine 332. Mn(2+) contacts are provided by aspartate 399, histidine 403, aspartate 440, histidine 441, and histidine 458.

The protein belongs to the BPG-independent phosphoglycerate mutase family. Monomer. Requires Mn(2+) as cofactor.

The catalysed reaction is (2R)-2-phosphoglycerate = (2R)-3-phosphoglycerate. The protein operates within carbohydrate degradation; glycolysis; pyruvate from D-glyceraldehyde 3-phosphate: step 3/5. Catalyzes the interconversion of 2-phosphoglycerate and 3-phosphoglycerate. This Parabacteroides distasonis (strain ATCC 8503 / DSM 20701 / CIP 104284 / JCM 5825 / NCTC 11152) protein is 2,3-bisphosphoglycerate-independent phosphoglycerate mutase.